Consider the following 228-residue polypeptide: Ribosomal RNA small subunit methyltransferase G (228 aa).

Residues Gly89, Leu94, 140 to 141 (VE), and Arg159 each bind S-adenosyl-L-methionine.

Belongs to the methyltransferase superfamily. RNA methyltransferase RsmG family.

Its subcellular location is the cytoplasm. The catalysed reaction is guanosine(527) in 16S rRNA + S-adenosyl-L-methionine = N(7)-methylguanosine(527) in 16S rRNA + S-adenosyl-L-homocysteine. Its function is as follows. Specifically methylates the N7 position of guanine in position 527 of 16S rRNA. In Burkholderia cenocepacia (strain ATCC BAA-245 / DSM 16553 / LMG 16656 / NCTC 13227 / J2315 / CF5610) (Burkholderia cepacia (strain J2315)), this protein is Ribosomal RNA small subunit methyltransferase G.